A 449-amino-acid polypeptide reads, in one-letter code: tRNA-2-methylthio-N(6)-dimethylallyladenosine synthase (449 aa).

The 122-residue stretch at 3–124 (KMLYIKTYGC…LPTMLEKLDS (122 aa)) folds into the MTTase N-terminal domain. Residues cysteine 12, cysteine 48, cysteine 87, cysteine 163, cysteine 167, and cysteine 170 each contribute to the [4Fe-4S] cluster site. One can recognise a Radical SAM core domain in the interval 149–380 (KSPTVSGLVS…QAQLMLQQLE (232 aa)). Residues 383–447 (QKLIGKVVPV…ASSLFGEVCP (65 aa)) enclose the TRAM domain.

Belongs to the methylthiotransferase family. MiaB subfamily. In terms of assembly, monomer. It depends on [4Fe-4S] cluster as a cofactor.

The protein resides in the cytoplasm. It carries out the reaction N(6)-dimethylallyladenosine(37) in tRNA + (sulfur carrier)-SH + AH2 + 2 S-adenosyl-L-methionine = 2-methylsulfanyl-N(6)-dimethylallyladenosine(37) in tRNA + (sulfur carrier)-H + 5'-deoxyadenosine + L-methionine + A + S-adenosyl-L-homocysteine + 2 H(+). Functionally, catalyzes the methylthiolation of N6-(dimethylallyl)adenosine (i(6)A), leading to the formation of 2-methylthio-N6-(dimethylallyl)adenosine (ms(2)i(6)A) at position 37 in tRNAs that read codons beginning with uridine. The polypeptide is tRNA-2-methylthio-N(6)-dimethylallyladenosine synthase (Orientia tsutsugamushi (strain Boryong) (Rickettsia tsutsugamushi)).